Reading from the N-terminus, the 312-residue chain is Pyridoxal kinase (312 aa).

Methionine 1 is modified (N-acetylmethionine). Positions 12 and 47 each coordinate pyridoxal. Threonine 47 serves as a coordination point for pyridoxal 5'-phosphate. Position 59 is a phosphoserine (serine 59). Aspartate 113 provides a ligand contact to ATP. Aspartate 113 contributes to the Na(+) binding site. Mg(2+) is bound at residue aspartate 118. Na(+) is bound at residue threonine 148. 150–153 (NQFE) contributes to the ATP binding site. Phosphoserine is present on serine 164. Residue threonine 186 coordinates Na(+). 186–187 (TS) provides a ligand contact to ATP. A Phosphoserine modification is found at serine 213. ATP is bound by residues 226–228 (VDP) and threonine 233. 234-235 (GD) is a binding site for pyridoxal 5'-phosphate. Aspartate 235 serves as the catalytic Proton acceptor. A Phosphoserine modification is found at serine 285.

This sequence belongs to the pyridoxine kinase family. As to quaternary structure, homodimer. Zn(2+) serves as cofactor. The cofactor is Mg(2+).

It localises to the cytoplasm. The protein resides in the cytosol. It catalyses the reaction pyridoxal + ATP = pyridoxal 5'-phosphate + ADP + H(+). The enzyme catalyses pyridoxamine + ATP = pyridoxamine 5'-phosphate + ADP + H(+). The catalysed reaction is pyridoxine + ATP = pyridoxine 5'-phosphate + ADP + H(+). It functions in the pathway cofactor metabolism; pyridoxal 5'-phosphate salvage; pyridoxal 5'-phosphate from pyridoxal: step 1/1. The protein operates within cofactor metabolism; pyridoxal 5'-phosphate salvage; pyridoxine 5'-phosphate from pyridoxine: step 1/1. It participates in cofactor metabolism; pyridoxal 5'-phosphate salvage; pyridoxamine 5'-phosphate from pyridoxamine: step 1/1. Activity is increased in the presence of K(+)or Na(+). Its function is as follows. Catalyzes the phosphorylation of the dietary vitamin B6 vitamers pyridoxal (PL), pyridoxine (PN) and pyridoxamine (PM) to form pyridoxal 5'-phosphate (PLP), pyridoxine 5'-phosphate (PNP) and pyridoxamine 5'-phosphate (PMP), respectively. PLP is the active form of vitamin B6, and acts as a cofactor for over 140 different enzymatic reactions. The chain is Pyridoxal kinase (Pdxk) from Rattus norvegicus (Rat).